We begin with the raw amino-acid sequence, 84 residues long: Mu-conotoxin-like Cal 12.2b (84 aa).

Positions 1–19 (MKLTCVLVVLLLVLPFGDL) are cleaved as a signal peptide. Residues 20 to 42 (ITTSNTEDNKRGATPWQNSLKAR) constitute a propeptide that is removed on maturation. 4 disulfides stabilise this stretch: Cys-45/Cys-57, Cys-52/Cys-65, Cys-59/Cys-70, and Cys-64/Cys-76. Trp-72 is subject to 6'-bromotryptophan. Pro-77 carries the post-translational modification 4-hydroxyproline. Trp-81 bears the 6'-bromotryptophan mark.

It belongs to the conotoxin O1 superfamily. In terms of tissue distribution, expressed by the venom duct.

It localises to the secreted. In terms of biological role, mu-conotoxins block voltage-gated sodium channels. This toxin reversibly blocks voltage-gated sodium channel in cephalopods, with no alteration in the voltage dependence of sodium conductance or on the kinetics of inactivation. The polypeptide is Mu-conotoxin-like Cal 12.2b (Californiconus californicus (California cone)).